The chain runs to 427 residues: Enolase (427 aa).

Glutamine 163 contributes to the (2R)-2-phosphoglycerate binding site. Glutamate 205 serves as the catalytic Proton donor. Aspartate 242, glutamate 285, and aspartate 312 together coordinate Mg(2+). (2R)-2-phosphoglycerate is bound by residues lysine 337, arginine 366, serine 367, and lysine 388. The active-site Proton acceptor is lysine 337.

Belongs to the enolase family. Mg(2+) is required as a cofactor.

The protein resides in the cytoplasm. Its subcellular location is the secreted. The protein localises to the cell surface. It carries out the reaction (2R)-2-phosphoglycerate = phosphoenolpyruvate + H2O. It functions in the pathway carbohydrate degradation; glycolysis; pyruvate from D-glyceraldehyde 3-phosphate: step 4/5. Catalyzes the reversible conversion of 2-phosphoglycerate (2-PG) into phosphoenolpyruvate (PEP). It is essential for the degradation of carbohydrates via glycolysis. The polypeptide is Enolase (Dechloromonas aromatica (strain RCB)).